Consider the following 105-residue polypeptide: Urease subunit beta (105 aa).

It belongs to the urease beta subunit family. In terms of assembly, heterotrimer of UreA (gamma), UreB (beta) and UreC (alpha) subunits. Three heterotrimers associate to form the active enzyme.

It localises to the cytoplasm. It carries out the reaction urea + 2 H2O + H(+) = hydrogencarbonate + 2 NH4(+). Its pathway is nitrogen metabolism; urea degradation; CO(2) and NH(3) from urea (urease route): step 1/1. The polypeptide is Urease subunit beta (Marinomonas sp. (strain MWYL1)).